A 119-amino-acid chain; its full sequence is Large ribosomal subunit protein bL19c (119 aa).

The protein belongs to the bacterial ribosomal protein bL19 family.

It localises to the plastid. The protein localises to the chloroplast. This Mesostigma viride (Green alga) protein is Large ribosomal subunit protein bL19c.